A 719-amino-acid polypeptide reads, in one-letter code: Polyribonucleotide nucleotidyltransferase (719 aa).

Positions 491 and 497 each coordinate Mg(2+). One can recognise a KH domain in the interval 558-617 (PRMLTIKINPEKIRDVIGKGGATIRALTEETGTQIDISDDGTIVIASVDETQAKEAQRRI). Residues 627–695 (GQIYDGSVLR…DKGRLRLSIK (69 aa)) enclose the S1 motif domain.

Belongs to the polyribonucleotide nucleotidyltransferase family. It depends on Mg(2+) as a cofactor.

The protein resides in the cytoplasm. The catalysed reaction is RNA(n+1) + phosphate = RNA(n) + a ribonucleoside 5'-diphosphate. Involved in mRNA degradation. Catalyzes the phosphorolysis of single-stranded polyribonucleotides processively in the 3'- to 5'-direction. This chain is Polyribonucleotide nucleotidyltransferase, found in Bordetella bronchiseptica (strain ATCC BAA-588 / NCTC 13252 / RB50) (Alcaligenes bronchisepticus).